The chain runs to 613 residues: Ribosome-associated molecular chaperone SSB1 (613 aa).

Residues 1 to 391 are nucleotide binding domain (NBD); it reads MADGVFQGAI…ILTGQSTNDD (391 aa). Residues 16–18, K73, 205–207, 271–278, and G342 contribute to the ATP site; these read TTY, GGT, and ERAKRSLS. Residues 392–402 form an inter-domain linker region; that stretch reads TKDLLLLDVIP. The substrate binding domain (SBD) stretch occupies residues 403–613; it reads LSLGVAMQGN…RAVTKGMATR (211 aa). The interval 516 to 612 is lid domain (SBDalpha); it reads TEEIEKMISD…KRAVTKGMAT (97 aa). A Nuclear export signal motif is present at residues 574 to 582; sequence IEAALSDAL.

This sequence belongs to the heat shock protein 70 family. Ssb-type Hsp70 subfamily. Binds to ribosomes. Binds close to the ribosomal tunnel exit via contacts with both ribosomal proteins and rRNA. Directly interacts with nascent polypeptides. This interaction is dependent on the ribosome-associated complex (RAC). Interacts with SSE1. Interacts with FES1.

The protein resides in the cytoplasm. The catalysed reaction is ATP + H2O = ADP + phosphate + H(+). Ribosome-bound, Hsp70-type chaperone that assists in the cotranslational folding of newly synthesized proteins in the cytosol. Stimulates folding by interacting with nascent chains, binding to short, largely hydrophobic sequences exposed by unfolded proteins, thereby stabilizing longer, more slowly translated, and aggregation-prone nascent polypeptides and domains that cannot fold stably until fully synthesized. The Hsp70-protein substrate interaction depends on ATP-binding and on allosteric regulation between the NBD and the SBD. The ATP-bound state is characterized by a fast exchange rate of substrate (low affinity state), while in the ADP-bound state exchange is much slower (high affinity state). During the Hsp70 cycle, the chaperone switches between the ATP-bound state (open conformation) and the ADP-bound state (closed conformation) by major conformational rearrangements involving mainly the lid domain. Ssb cooperates with a specific Hsp40/Hsp70 co-chaperone termed the ribosome-associated complex (RAC), which stimulates the ATPase activity of the ribosome-associated pool of Ssbs and switches it to the high affinity substrate binding state. Hsp110 chaperone SSE1 and FES1 act as nucleotide exchange factors that cause substrate release. The sequence is that of Ribosome-associated molecular chaperone SSB1 (SSB1) from Candida albicans (strain WO-1) (Yeast).